The sequence spans 413 residues: Putative glutamate--cysteine ligase 2 (413 aa).

Residues 392–413 form a disordered region; that stretch reads GGVCALSTPQGDPLPGWAERLH.

This sequence belongs to the glutamate--cysteine ligase type 2 family. YbdK subfamily.

The catalysed reaction is L-cysteine + L-glutamate + ATP = gamma-L-glutamyl-L-cysteine + ADP + phosphate + H(+). Functionally, ATP-dependent carboxylate-amine ligase which exhibits weak glutamate--cysteine ligase activity. The polypeptide is Putative glutamate--cysteine ligase 2 (Bordetella bronchiseptica (strain ATCC BAA-588 / NCTC 13252 / RB50) (Alcaligenes bronchisepticus)).